A 556-amino-acid chain; its full sequence is Guard cell S-type anion channel SLAC1 (556 aa).

A disordered region spans residues 1-103 (MERKQSNAHS…GIINGGDGRK (103 aa)). The Cytoplasmic portion of the chain corresponds to 1–189 (MERKQSNAHS…EQWPFLLRFP (189 aa)). Residues 10–36 (STFADINEVEDEAEQELQQQENNNNKR) are a coiled coil. Residues 25-34 (ELQQQENNNN) are compositionally biased toward low complexity. Position 59 is a phosphoserine; by SRK2E (Ser59). Positions 69–79 (RESRERDDKKS) are enriched in basic and acidic residues. Phosphoserine; by SRK2E is present on residues Ser86, Ser113, and Ser120. Residues 86–99 (SFGGFESGGIINGG) show a composition bias toward gly residues. Residue Ser146 is modified to Phosphoserine. Residues 190-210 (IGCFGICLGLSSQAVLWLALA) form a helical membrane-spanning segment. The Extracellular portion of the chain corresponds to 211 to 216 (KSPATN). The chain crosses the membrane as a helical span at residues 217 to 237 (FLHITPLINLVVWLFSLVVLV). The Cytoplasmic segment spans residues 238–265 (SVSFTYILKCIFYFEAVKREYFHPVRVN). The helical transmembrane segment at 266–286 (FFFAPWVVCMFLAISVPPMFS) threads the bilayer. At 287–295 (PNRKYLHPA) the chain is on the extracellular side. The helical transmembrane segment at 296-316 (IWCVFMGPYFFLELKIYGQWL) threads the bilayer. The Cytoplasmic portion of the chain corresponds to 317–325 (SGGKRRLCK). The chain crosses the membrane as a helical span at residues 326 to 346 (VANPSSHLSVVGNFVGAILAS). Topologically, residues 347–352 (KVGWDE) are extracellular. Residues 353–373 (VAKFLWAVGFAHYLVVFVTLY) form a helical membrane-spanning segment. The Cytoplasmic portion of the chain corresponds to 374–388 (QRLPTSEALPKELHP). The helical transmembrane segment at 389–409 (VYSMFIAAPSAASIAWNTIYG) threads the bilayer. At 410-418 (QFDGCSRTC) the chain is on the extracellular side. Residues 419–439 (FFIALFLYISLVARINFFTGF) traverse the membrane as a helical segment. A topological domain (cytoplasmic) is located at residue Lys440. Residues 441–463 (FSVAWWSYTFPMTTASVATIKYA) form a helical membrane-spanning segment. Over 464-479 (EAVPGYPSRALALTLS) the chain is Extracellular. Residues 480–500 (FISTAMVCVLFVSTLLHAFVW) form a helical membrane-spanning segment. Over 501 to 556 (QTLFPNDLAIAITKRKLTREKKPFKRAYDLKRWTKQALAKKISAEKDFEAEEESHH) the chain is Cytoplasmic.

The protein belongs to the SLAC1 S-type anion channel family. Homotrimer. Interacts with SRK2E, CPK6, CPK21, CPK23 and PP2CA. The channel is inactivated upon PP2CA and ABI1 binding. Interacts with KAT1, KAT2, KAT3/KC1 and AKT2. Interacts with GHR1. Post-translationally, phosphorylation by SRK2E, especially on Ser-120, activates the channel. Also phosphorylated and activated by CPK21 and CPK23. Abscisic acid (ABA) promotes phosphorylation. This phosphorylation is inhibited by ABI1. Phosphorylated and activated by GHR1; this phosphorylation is repressed by ABI2 but not ABI1. Phosphorylated by HT1 on N-terminus but not C-terminus. As to expression, preferentially expressed in guard cells. Also detected in the vascular strands close to the leaf margins.

It localises to the cell membrane. Its activity is regulated as follows. Activated by GHR1-mediated phosphorylation which is negatively regulated by ABI2 but not ABI1. Activation by SRK2E/OST1 and GHR1 is repressed by HT1. Its function is as follows. Slow, weak voltage-dependent S-type anion efflux channel involved in maintenance of anion homeostasis. Cl(-) efflux through SLAC1 causes membrane depolarization, which activates outward-rectifying K1 channels, leading to KCl and water efflux to reduce turgor further and cause stomatal closure, that reduces water loss and promotes leaf turgor. Essential for stomatal closure in response to CO(2), abscisic acid (ABA), ozone O(3), light/dark transitions, humidity change, calcium ions, hydrogen peroxide H(2)O(2), reactive oxygen species (ROS), and nitric oxide. Binds to the highly selective inward-rectifying potassium channels KAT1 and AKT2, and inhibits their activities. Functions as an essential negative regulator of inward potassium channels in guard cells. Essential for the efficient stomatal closure and opening in guard cells. Involved in the local and/or systemic stomatal responses (e.g. stomatal closure) to light stress. The protein is Guard cell S-type anion channel SLAC1 of Arabidopsis thaliana (Mouse-ear cress).